We begin with the raw amino-acid sequence, 362 residues long: Probable peptidyl-prolyl cis-trans isomerase C27F1.06c (362 aa).

Phosphoserine is present on Ser-69. The tract at residues 144–274 is disordered; that stretch reads DEFSSDEEEM…KVKGDGPAAK (131 aa). Acidic residues-rich tracts occupy residues 146–167 and 175–189; these read FSSD…EEEE and LNSD…EEEI. Ser-177 is subject to Phosphoserine. The segment covering 190 to 218 has biased composition (basic and acidic residues); the sequence is LEKPVPKDEVAEKHSKDKLKKEEKEKKTA. A PPIase FKBP-type domain is found at 276–362; the sequence is KKRVSMRYIG…VFDVKLLAVN (87 aa).

Belongs to the FKBP-type PPIase family. FKBP3/4 subfamily.

It carries out the reaction [protein]-peptidylproline (omega=180) = [protein]-peptidylproline (omega=0). PPIases accelerate the folding of proteins. It catalyzes the cis-trans isomerization of proline imidic peptide bonds in oligopeptides. The protein is Probable peptidyl-prolyl cis-trans isomerase C27F1.06c of Schizosaccharomyces pombe (strain 972 / ATCC 24843) (Fission yeast).